The sequence spans 108 residues: uncharacterized protein (108 aa).

This is an uncharacterized protein from Saccharolobus islandicus (Sulfolobus islandicus).